We begin with the raw amino-acid sequence, 358 residues long: Psilocybin cluster transcription regulator (358 aa).

Disordered stretches follow at residues 1–40 (MAPA…IAGM) and 62–212 (SGGK…RRRR). The segment covering 18–29 (PPAPGAPAPANA) has biased composition (pro residues). Residues 79-91 (QTLSNLAQAQPYG) are compositionally biased toward polar residues. Residues 179–190 (PTTGRRGGRSAT) show a composition bias toward low complexity. A compositionally biased stretch (basic and acidic residues) spans 195–209 (EWSRQRKDNHKEVER). Residues 199–212 (QRKDNHKEVERRRR) are basic motif. Positions 199-249 (QRKDNHKEVERRRRGNINEGINELGRIVPSGSGEKAKGAILSRAVQYIHHL) constitute a bHLH domain. The interval 213–249 (GNINEGINELGRIVPSGSGEKAKGAILSRAVQYIHHL) is helix-loop-helix motif. The stretch at 264–306 (KLLMDQAMGDLQAQLEEVKRLWEEERMARTRLEAELEVLRNMN) forms a coiled coil. Residues 308-358 (VNAGSAPASKDESAAGTKRRSTDGAEAATAATESSTANAEGERDGKRQRTE) are disordered. The segment covering 331 to 346 (GAEAATAATESSTANA) has biased composition (low complexity). Residues 347 to 358 (EGERDGKRQRTE) are compositionally biased toward basic and acidic residues.

The protein resides in the nucleus. Its function is as follows. Transcription factor that may regulate the expression of the gene cluster that mediates the biosynthesis of psilocybin, a psychotropic tryptamine-derived natural product. This Psilocybe cubensis (Psychedelic mushroom) protein is Psilocybin cluster transcription regulator.